Here is a 100-residue protein sequence, read N- to C-terminus: NADH-quinone oxidoreductase subunit K (100 aa).

3 helical membrane-spanning segments follow: residues 2–22 (ITLTHYLILSAILFSIALVGI), 29–49 (LMLFFATEIALNAVNIALAAF), and 63–83 (FFIIAIAASEVAVGLGLLIIW).

This sequence belongs to the complex I subunit 4L family. In terms of assembly, NDH-1 is composed of 14 different subunits. Subunits NuoA, H, J, K, L, M, N constitute the membrane sector of the complex.

It is found in the cell inner membrane. It carries out the reaction a quinone + NADH + 5 H(+)(in) = a quinol + NAD(+) + 4 H(+)(out). NDH-1 shuttles electrons from NADH, via FMN and iron-sulfur (Fe-S) centers, to quinones in the respiratory chain. The immediate electron acceptor for the enzyme in this species is believed to be ubiquinone. Couples the redox reaction to proton translocation (for every two electrons transferred, four hydrogen ions are translocated across the cytoplasmic membrane), and thus conserves the redox energy in a proton gradient. This is NADH-quinone oxidoreductase subunit K from Nitratiruptor sp. (strain SB155-2).